We begin with the raw amino-acid sequence, 513 residues long: Membrane protein (513 aa).

4 consecutive repeat copies span residues 9-11, 12-14, 15-17, and 18-20. Residues 9–20 are 4 X 3 AA tandem repeats of P-S-A; it reads PSAPSAPSAPSA. The next 14 helical transmembrane spans lie at 32–52, 56–76, 79–99, 126–146, 165–185, 208–228, 254–274, 309–329, 332–352, 360–380, 400–420, 422–442, 447–467, and 487–507; these read LTLHWGLFAAVAALLVVLAIP, GLTVAGQRMLAILAFAIVVWI, AVSYETSAIMITSLMAGLIGF, TALALVAAALFISAAMTVTGL, ILIGTIAVTIALSLVVPSATA, NIAAGIMITVAQATSIWNVGI, QWLIAGAPWAIAMSVVLYFLV, LAAVSLGLLLFWATEGKLHSF, ATVTFVGLVILMMPRIGVMDW, PWGTLIVFGVGISLGTALLST, GALLVFAILSAFLILIHLGFA, ATALTAALLPILIAVLQTLPG, VGMTMLLGFTVSFGFILPINA, and IGIPVTIIGYAMMLLFAATYW.

This sequence belongs to the SLC13A/DASS transporter (TC 2.A.47) family. DIT1 subfamily.

The protein localises to the cell membrane. The polypeptide is Membrane protein (Cupriavidus necator (strain ATCC 17699 / DSM 428 / KCTC 22496 / NCIMB 10442 / H16 / Stanier 337) (Ralstonia eutropha)).